We begin with the raw amino-acid sequence, 188 residues long: Ribosomal RNA small subunit methyltransferase G (188 aa).

S-adenosyl-L-methionine contacts are provided by residues Gly-69, Phe-74, Val-119 to Gln-120, and Arg-134.

Belongs to the methyltransferase superfamily. RNA methyltransferase RsmG family.

The protein resides in the cytoplasm. It carries out the reaction guanosine(527) in 16S rRNA + S-adenosyl-L-methionine = N(7)-methylguanosine(527) in 16S rRNA + S-adenosyl-L-homocysteine. Its function is as follows. Specifically methylates the N7 position of guanine in position 527 of 16S rRNA. The chain is Ribosomal RNA small subunit methyltransferase G from Campylobacter jejuni subsp. doylei (strain ATCC BAA-1458 / RM4099 / 269.97).